A 273-amino-acid chain; its full sequence is Orotidine 5'-phosphate decarboxylase (273 aa).

Catalysis depends on lysine 96, which acts as the Proton donor.

This sequence belongs to the OMP decarboxylase family. Type 2 subfamily.

It catalyses the reaction orotidine 5'-phosphate + H(+) = UMP + CO2. It functions in the pathway pyrimidine metabolism; UMP biosynthesis via de novo pathway; UMP from orotate: step 2/2. The sequence is that of Orotidine 5'-phosphate decarboxylase from Nocardioides sp. (strain ATCC BAA-499 / JS614).